A 152-amino-acid chain; its full sequence is Deoxyuridine 5'-triphosphate nucleotidohydrolase (152 aa).

Substrate is bound by residues 71 to 73 (RSG), Asn84, 88 to 90 (LID), and Met98.

This sequence belongs to the dUTPase family. Mg(2+) is required as a cofactor.

It carries out the reaction dUTP + H2O = dUMP + diphosphate + H(+). Its pathway is pyrimidine metabolism; dUMP biosynthesis; dUMP from dCTP (dUTP route): step 2/2. Its function is as follows. This enzyme is involved in nucleotide metabolism: it produces dUMP, the immediate precursor of thymidine nucleotides and it decreases the intracellular concentration of dUTP so that uracil cannot be incorporated into DNA. This chain is Deoxyuridine 5'-triphosphate nucleotidohydrolase, found in Citrobacter koseri (strain ATCC BAA-895 / CDC 4225-83 / SGSC4696).